Reading from the N-terminus, the 286-residue chain is Diaminopimelate epimerase (286 aa).

Positions 12 and 67 each coordinate substrate. Cys-76 serves as the catalytic Proton donor. Residues 77 to 78 (GN), Asn-165, Asn-198, and 216 to 217 (ER) contribute to the substrate site. Cys-225 (proton acceptor) is an active-site residue. Residue 226-227 (GT) participates in substrate binding.

Belongs to the diaminopimelate epimerase family. In terms of assembly, homodimer.

The protein resides in the cytoplasm. It catalyses the reaction (2S,6S)-2,6-diaminopimelate = meso-2,6-diaminopimelate. It functions in the pathway amino-acid biosynthesis; L-lysine biosynthesis via DAP pathway; DL-2,6-diaminopimelate from LL-2,6-diaminopimelate: step 1/1. Functionally, catalyzes the stereoinversion of LL-2,6-diaminopimelate (L,L-DAP) to meso-diaminopimelate (meso-DAP), a precursor of L-lysine. In Methanothermobacter thermautotrophicus (strain ATCC 29096 / DSM 1053 / JCM 10044 / NBRC 100330 / Delta H) (Methanobacterium thermoautotrophicum), this protein is Diaminopimelate epimerase.